The primary structure comprises 143 residues: Peptide methionine sulfoxide reductase MsrB (143 aa).

The MsrB domain maps to 16–139; sequence DAELRRRLTP…NSAALNFESR (124 aa). Cys-55, Cys-58, Cys-104, and Cys-107 together coordinate Zn(2+). The Nucleophile role is filled by Cys-128.

This sequence belongs to the MsrB Met sulfoxide reductase family. The cofactor is Zn(2+).

The enzyme catalyses L-methionyl-[protein] + [thioredoxin]-disulfide + H2O = L-methionyl-(R)-S-oxide-[protein] + [thioredoxin]-dithiol. The polypeptide is Peptide methionine sulfoxide reductase MsrB (Burkholderia ambifaria (strain ATCC BAA-244 / DSM 16087 / CCUG 44356 / LMG 19182 / AMMD) (Burkholderia cepacia (strain AMMD))).